The sequence spans 833 residues: pre-rRNA 2'-O-ribose RNA methyltransferase (833 aa).

S-adenosyl-L-methionine is bound by residues Gly-57, Trp-59, Asp-77, Asp-93, and Asp-118. Lys-158 acts as the Proton acceptor in catalysis. Disordered stretches follow at residues 323–349 (KLDN…MEEN), 363–453 (KKKR…DEYL), 475–640 (LDDV…SDED), 730–767 (LGKK…SGTD), and 779–833 (IAKK…KNKK). Positions 336–386 (EEKKELTAEEMEENLQEEMKEYLALVEKKKRKEKKRQNELKRKHQRKIELT) form a coiled coil. The segment covering 363 to 381 (KKKRKEKKRQNELKRKHQR) has biased composition (basic residues). Positions 382-396 (KIELTMHIPGDKIEE) are enriched in basic and acidic residues. Acidic residues predominate over residues 423-441 (SSDEFDSDDSDDDDDDDNN). A coiled-coil region spans residues 455–485 (QQLDEQYKLYQQRIRKKAAKLDDVKVKKDKI). Residues 475–486 (LDDVKVKKDKIG) are compositionally biased toward basic and acidic residues. Acidic residues-rich tracts occupy residues 490 to 503 (YNED…EQEE) and 542 to 556 (SESE…DQDD). The span at 557-566 (ENNKPIDISK) shows a compositional bias: basic and acidic residues. 2 stretches are compositionally biased toward acidic residues: residues 605 to 614 (DKDDQDDDDD) and 626 to 640 (PVQE…SDED). 3 stretches are compositionally biased toward basic and acidic residues: residues 732-741 (KKMEKTRDKA), 751-767 (SNRE…SGTD), and 794-806 (KIVD…DLRA).

It belongs to the class I-like SAM-binding methyltransferase superfamily. RNA methyltransferase RlmE family. SPB1 subfamily.

Its subcellular location is the nucleus. It localises to the nucleolus. The catalysed reaction is a ribonucleotide in rRNA + S-adenosyl-L-methionine = a 2'-O-methylribonucleotide in rRNA + S-adenosyl-L-homocysteine + H(+). In terms of biological role, RNA 2'-O-methyltransferase involved in the maturation of rRNA and in the biogenesis of ribosomal subunits. This is pre-rRNA 2'-O-ribose RNA methyltransferase (fsjC) from Dictyostelium discoideum (Social amoeba).